A 217-amino-acid polypeptide reads, in one-letter code: HTH-type transcriptional regulator EthR (217 aa).

The segment at 1–22 (MTTASQTRTPRGRRSARPSGDD) is disordered. The region spanning 21–81 (DDREAAILAT…SLIDPLIKRA (61 aa)) is the HTH tetR-type domain. The H-T-H motif DNA-binding region spans 44–63 (SVDDLAKGAGISRPTFYFYF).

In terms of assembly, homodimer.

Functionally, involved in the repression of teh monooxygenase EthA which is responsible of the formation of the active metabolite of ethionamide (ETH). This Mycolicibacterium smegmatis (strain ATCC 700084 / mc(2)155) (Mycobacterium smegmatis) protein is HTH-type transcriptional regulator EthR (ethR).